A 169-amino-acid polypeptide reads, in one-letter code: 6,7-dimethyl-8-ribityllumazine synthase (169 aa).

5-amino-6-(D-ribitylamino)uracil contacts are provided by residues Phe24, 58–60, and 82–84; these read ALE and AVV. 87 to 88 is a (2S)-2-hydroxy-3-oxobutyl phosphate binding site; the sequence is ET. Catalysis depends on His90, which acts as the Proton donor. Asn115 is a binding site for 5-amino-6-(D-ribitylamino)uracil. Position 129 (Arg129) interacts with (2S)-2-hydroxy-3-oxobutyl phosphate.

The protein belongs to the DMRL synthase family.

The catalysed reaction is (2S)-2-hydroxy-3-oxobutyl phosphate + 5-amino-6-(D-ribitylamino)uracil = 6,7-dimethyl-8-(1-D-ribityl)lumazine + phosphate + 2 H2O + H(+). Its pathway is cofactor biosynthesis; riboflavin biosynthesis; riboflavin from 2-hydroxy-3-oxobutyl phosphate and 5-amino-6-(D-ribitylamino)uracil: step 1/2. In terms of biological role, catalyzes the formation of 6,7-dimethyl-8-ribityllumazine by condensation of 5-amino-6-(D-ribitylamino)uracil with 3,4-dihydroxy-2-butanone 4-phosphate. This is the penultimate step in the biosynthesis of riboflavin. The sequence is that of 6,7-dimethyl-8-ribityllumazine synthase from Cupriavidus metallidurans (strain ATCC 43123 / DSM 2839 / NBRC 102507 / CH34) (Ralstonia metallidurans).